The primary structure comprises 496 residues: NADP-dependent glyceraldehyde-3-phosphate dehydrogenase (496 aa).

Residues R116 and 169–170 each bind substrate; that span reads NY. NADP(+) is bound by residues K192, T195, and D230. 245-249 is an NAD(+) binding site; that stretch reads GGDTG. The active-site Proton acceptor is the E264. 297–299 serves as a coordination point for substrate; that stretch reads RCT. C298 serves as the catalytic Nucleophile. E391 serves as a coordination point for NADP(+). R451 contributes to the substrate binding site.

The protein belongs to the aldehyde dehydrogenase family.

It is found in the cytoplasm. The protein localises to the cytosol. The catalysed reaction is D-glyceraldehyde 3-phosphate + NADP(+) + H2O = (2R)-3-phosphoglycerate + NADPH + 2 H(+). Competitive inhibition by NADPH, 3-phospho-D-glycerate and ATP. In terms of biological role, important as a means of generating NADPH for biosynthetic reactions. May be a main source of cytosolic NADPH for mannitol biosynthesis in leaves. The protein is NADP-dependent glyceraldehyde-3-phosphate dehydrogenase of Apium graveolens (Celery).